The chain runs to 272 residues: Orotidine 5'-phosphate decarboxylase (272 aa).

Lys-93 serves as the catalytic Proton donor.

This sequence belongs to the OMP decarboxylase family. Type 2 subfamily.

It carries out the reaction orotidine 5'-phosphate + H(+) = UMP + CO2. It participates in pyrimidine metabolism; UMP biosynthesis via de novo pathway; UMP from orotate: step 2/2. The chain is Orotidine 5'-phosphate decarboxylase from Roseiflexus castenholzii (strain DSM 13941 / HLO8).